A 208-amino-acid chain; its full sequence is Large ribosomal subunit protein uL3 (208 aa).

The tract at residues 116–148 (GFQGVIKRHGQSRGPMAHGSRYHRRPGSMGPVA) is disordered.

Belongs to the universal ribosomal protein uL3 family. In terms of assembly, part of the 50S ribosomal subunit. Forms a cluster with proteins L14 and L19.

In terms of biological role, one of the primary rRNA binding proteins, it binds directly near the 3'-end of the 23S rRNA, where it nucleates assembly of the 50S subunit. The protein is Large ribosomal subunit protein uL3 of Streptococcus pneumoniae (strain Hungary19A-6).